Consider the following 358-residue polypeptide: MNSIHLPSHQRTSAPGLHQHRPKGAQEASEMAVYCDNFSMYHQQNLHSSQRAPNYGIGDYAPPTNPYLWLGGPGVSNSPSNSSSFCGTDLSWLSVASQEELLKVVRPPYSYSALIAMAIQNAPEKKLTLSQIYQYVADNFPFYKRSKAGWQNSIRHNLSLNDCFKKVPRDEDDPGKGNYWTLDPNCEKMFDNGNFRRKRKRRSDSSSAEAVTVKGEEGRPALGGKGGESPLMLTPSSPELEAASDGRKSTSPSGITSSPCLNNFFSSMTSLDTTSVNRQMSMGLVNELSQRNITGLGSFTSGSVAEPSVDLQDNSLHLNRPSYYSTLSSTHQNNQFNSHFYNTFSVNSLIYAREGSEV.

A compositionally biased stretch (polar residues) spans methionine 1 to serine 13. Disordered regions lie at residues methionine 1–alanine 25 and aspartate 191–isoleucine 255. Positions arginine 106–lysine 200 form a DNA-binding region, fork-head.

The protein localises to the nucleus. Its function is as follows. Probable transcription factor. The chain is Forkhead box protein I1c from Xenopus tropicalis (Western clawed frog).